Reading from the N-terminus, the 311-residue chain is Protease HtpX homolog 1 (311 aa).

Transmembrane regions (helical) follow at residues 12 to 32 (IIAL…IINF) and 35 to 55 (FPVI…WLIS). Residue His137 participates in Zn(2+) binding. Residue Glu138 is part of the active site. Zn(2+) is bound at residue His141. The next 2 helical transmembrane spans lie at 159–179 (ILGF…IFAV) and 184–204 (ILVG…TFFL). Glu216 provides a ligand contact to Zn(2+).

Belongs to the peptidase M48B family. Zn(2+) serves as cofactor.

The protein resides in the cell membrane. In Sulfurisphaera tokodaii (strain DSM 16993 / JCM 10545 / NBRC 100140 / 7) (Sulfolobus tokodaii), this protein is Protease HtpX homolog 1.